The primary structure comprises 189 residues: Pyridoxal 5'-phosphate synthase subunit PdxT (189 aa).

47 to 49 lines the L-glutamine pocket; sequence GES. Cys79 acts as the Nucleophile in catalysis. L-glutamine-binding positions include Arg106 and 135–136; that span reads IR. Catalysis depends on charge relay system residues His171 and Glu173.

This sequence belongs to the glutaminase PdxT/SNO family. As to quaternary structure, in the presence of PdxS, forms a dodecamer of heterodimers. Only shows activity in the heterodimer.

The enzyme catalyses aldehydo-D-ribose 5-phosphate + D-glyceraldehyde 3-phosphate + L-glutamine = pyridoxal 5'-phosphate + L-glutamate + phosphate + 3 H2O + H(+). It catalyses the reaction L-glutamine + H2O = L-glutamate + NH4(+). It functions in the pathway cofactor biosynthesis; pyridoxal 5'-phosphate biosynthesis. Functionally, catalyzes the hydrolysis of glutamine to glutamate and ammonia as part of the biosynthesis of pyridoxal 5'-phosphate. The resulting ammonia molecule is channeled to the active site of PdxS. The polypeptide is Pyridoxal 5'-phosphate synthase subunit PdxT (Thermoanaerobacter pseudethanolicus (strain ATCC 33223 / 39E) (Clostridium thermohydrosulfuricum)).